Consider the following 329-residue polypeptide: Nicotianamine synthase 8 (329 aa).

This sequence belongs to the nicotianamine synthase (NAS)-like family. In terms of assembly, homotrimer.

The catalysed reaction is 3 S-adenosyl-L-methionine = nicotianamine + 3 S-methyl-5'-thioadenosine + 3 H(+). Synthesizes nicotianamine, a polyamine that is the first intermediate in the synthesis of the phytosiderophores of the mugineic acid type found in gramineae which serve as a sensor for the physiological iron status within the plant, and/or might be involved in the transport of iron. This is Nicotianamine synthase 8 (NAS8) from Hordeum vulgare (Barley).